The primary structure comprises 84 residues: Tenecin-1 (84 aa).

Residues 1–19 form the signal peptide; that stretch reads MKLTIFALVACFFILQIAA. The propeptide occupies 20 to 41; it reads FPLEEAATAEEIEQGEHIRVKR. Intrachain disulfides connect Cys44/Cys75, Cys61/Cys81, and Cys65/Cys83.

This sequence belongs to the invertebrate defensin family. Type 1 subfamily.

It localises to the secreted. Its function is as follows. Bactericidal protein produced in response to injury. It is cytotoxic to Gram-positive bacteria. The polypeptide is Tenecin-1 (Tenebrio molitor (Yellow mealworm beetle)).